The sequence spans 335 residues: Ubiquinone biosynthesis protein COQ4, mitochondrial (335 aa).

The transit peptide at 1–10 (MLRLSLLRST) directs the protein to the mitochondrion. Zn(2+)-binding residues include histidine 210, aspartate 211, histidine 214, and glutamate 226.

This sequence belongs to the COQ4 family. As to quaternary structure, component of a multi-subunit COQ enzyme complex, composed of at least COQ3, COQ4, COQ5, COQ6, COQ7 and COQ9. Interacts with COQ3. Zn(2+) is required as a cofactor.

The protein resides in the mitochondrion inner membrane. The enzyme catalyses 4-hydroxy-3-methoxy-5-(all-trans-hexaprenyl)benzoate + H(+) = 2-methoxy-6-(all-trans-hexaprenyl)phenol + CO2. It functions in the pathway cofactor biosynthesis; ubiquinone biosynthesis. Its function is as follows. Lyase that catalyzes the C1-decarboxylation of 4-hydroxy-3-methoxy-5-(all-trans-hexaprenyl)benzoic acid into 2-methoxy-6-(all-trans-hexaprenyl)phenol during ubiquinone biosynthesis. The sequence is that of Ubiquinone biosynthesis protein COQ4, mitochondrial from Saccharomyces cerevisiae (strain RM11-1a) (Baker's yeast).